The following is a 366-amino-acid chain: Aliphatic nitrilase (366 aa).

A CN hydrolase domain is found at 8–282 (FKVAAVQAQP…EGILYADIDL (275 aa)). Catalysis depends on E48, which acts as the Proton acceptor. The active-site Proton donor is the K131. The active-site Nucleophile is the C165. The disordered stretch occupies residues 346-366 (DEQRALPSTHSDETDRATASI). Residues 355-366 (HSDETDRATASI) show a composition bias toward basic and acidic residues.

Belongs to the carbon-nitrogen hydrolase superfamily. Nitrilase family. In terms of assembly, homodimer.

The enzyme catalyses an aliphatic nitrile + 2 H2O = a carboxylate + NH4(+). In Rhodococcus rhodochrous, this protein is Aliphatic nitrilase (nitA).